Consider the following 104-residue polypeptide: Iron-sulfur cluster assembly protein CyaY (104 aa).

It belongs to the frataxin family.

In terms of biological role, involved in iron-sulfur (Fe-S) cluster assembly. May act as a regulator of Fe-S biogenesis. The sequence is that of Iron-sulfur cluster assembly protein CyaY from Vibrio atlanticus (strain LGP32) (Vibrio splendidus (strain Mel32)).